A 548-amino-acid chain; its full sequence is Phosphoglucomutase (548 aa).

Residue Ser135 is the Phosphoserine intermediate of the active site. Ser135, Asp288, Asp290, and Asp292 together coordinate Mg(2+).

This sequence belongs to the phosphohexose mutase family. It depends on Mg(2+) as a cofactor.

It carries out the reaction alpha-D-glucose 1-phosphate = alpha-D-glucose 6-phosphate. It participates in glycolipid metabolism; diglucosyl-diacylglycerol biosynthesis. Functionally, catalyzes the interconversion between glucose-6-phosphate and alpha-glucose-1-phosphate. This is the first step in the biosynthesis of diglucosyl-diacylglycerol (Glc2-DAG), i.e. a glycolipid found in the membrane, which is also used as a membrane anchor for lipoteichoic acid (LTA). In Staphylococcus haemolyticus (strain JCSC1435), this protein is Phosphoglucomutase (pgcA).